The following is a 248-amino-acid chain: tRNA pseudouridine synthase A (248 aa).

Asp54 functions as the Nucleophile in the catalytic mechanism. Tyr112 provides a ligand contact to substrate.

This sequence belongs to the tRNA pseudouridine synthase TruA family. In terms of assembly, homodimer.

It carries out the reaction uridine(38/39/40) in tRNA = pseudouridine(38/39/40) in tRNA. In terms of biological role, formation of pseudouridine at positions 38, 39 and 40 in the anticodon stem and loop of transfer RNAs. The polypeptide is tRNA pseudouridine synthase A (Geobacillus sp. (strain WCH70)).